The chain runs to 407 residues: Phosphopentomutase (407 aa).

Mn(2+)-binding residues include aspartate 10, aspartate 306, histidine 311, aspartate 347, histidine 348, and histidine 359.

The protein belongs to the phosphopentomutase family. Requires Mn(2+) as cofactor.

The protein resides in the cytoplasm. The enzyme catalyses 2-deoxy-alpha-D-ribose 1-phosphate = 2-deoxy-D-ribose 5-phosphate. It carries out the reaction alpha-D-ribose 1-phosphate = D-ribose 5-phosphate. The protein operates within carbohydrate degradation; 2-deoxy-D-ribose 1-phosphate degradation; D-glyceraldehyde 3-phosphate and acetaldehyde from 2-deoxy-alpha-D-ribose 1-phosphate: step 1/2. Isomerase that catalyzes the conversion of deoxy-ribose 1-phosphate (dRib-1-P) and ribose 1-phosphate (Rib-1-P) to deoxy-ribose 5-phosphate (dRib-5-P) and ribose 5-phosphate (Rib-5-P), respectively. This Yersinia pestis bv. Antiqua (strain Antiqua) protein is Phosphopentomutase.